Reading from the N-terminus, the 850-residue chain is Receptor-like protein kinase ANXUR1 (850 aa).

Positions 1–26 are cleaved as a signal peptide; that stretch reads MSGKTRILFFLTCLSFLLVFPTRSNG. Topologically, residues 27–429 are extracellular; the sequence is QDLALSCGTS…KKEFKNEKRH (403 aa). N-linked (GlcNAc...) asparagine glycans are attached at residues N114, N132, N292, N302, and N330. A helical transmembrane segment spans residues 430-450; it reads AFIIGSAGGVLAVLIGALCFT. The Cytoplasmic segment spans residues 451–850; that stretch reads AYKKKQGYQG…FSQIVNPKGR (400 aa). In terms of domain architecture, Protein kinase spans 517 to 790; it reads FDDSNVIGVG…GDVLWNLEFA (274 aa). ATP contacts are provided by residues 523 to 531 and K545; that span reads IGVGGFGKV. The Proton acceptor role is filled by D641. Residues 796-850 form a disordered region; the sequence is TADGTRHRTPNNGGSSEDLGRGGMAVNVAGRDDVSDLSSEDNTEIFSQIVNPKGR. Positions 839–850 are enriched in polar residues; sequence EIFSQIVNPKGR.

The protein belongs to the protein kinase superfamily. Ser/Thr protein kinase family. As to expression, expressed in pollen, but not in pistils or seedlings.

It is found in the cell membrane. It carries out the reaction L-seryl-[protein] + ATP = O-phospho-L-seryl-[protein] + ADP + H(+). The catalysed reaction is L-threonyl-[protein] + ATP = O-phospho-L-threonyl-[protein] + ADP + H(+). Receptor-like protein kinase that controls pollen tube behavior by directing rupture at proper timing to release the sperm cell. The polypeptide is Receptor-like protein kinase ANXUR1 (ANX1) (Arabidopsis thaliana (Mouse-ear cress)).